Here is a 435-residue protein sequence, read N- to C-terminus: MKLAIVPFFRELTWSQVRNLFHFAARRLTEERLPQVAGSLTFTTVLALVPILTIALAIFTTFPLFNTFRTSLEAYFVHNLMPKGIANTILGYLTQFSSKATRLSAFGAVALIVTAVAMMLMIDRVFNQIWRVKTKRPIVQRILVYWAIVTLGPLLIGASMTFTSYLFTATDGVVRGVPFVGAVFYTSISILLSMVAFTSLYIVVPNRLVEWRDAVVGGLLAAIAFEIVKRLFAAFVIKVPTYTVVYGAVAAFPIFLVWVYLGWLITLAGAVVTAALPIVKYERWWHVPQPGSAFVDAMALIAVLYEARASADSAVVDTKLLRDRTQLGFDESEALLEKMLDAGWVARLKSEGPKRMQWGKRITDGLDRWVLLANPEYLTLADVYRVFVFDAGGNEMLAKKVECAVEQGLYQSLANYFRESSEGDLPGQHLPVHQP.

6 helical membrane-spanning segments follow: residues 45–65 (VLALVPILTIALAIFTTFPLF), 103–123 (LSAFGAVALIVTAVAMMLMID), 142–162 (ILVYWAIVTLGPLLIGASMTF), 177–197 (VPFVGAVFYTSISILLSMVAF), 208–228 (LVEWRDAVVGGLLAAIAFEIV), and 252–272 (FPIFLVWVYLGWLITLAGAVV).

Belongs to the UPF0761 family.

Its subcellular location is the cell inner membrane. In Janthinobacterium sp. (strain Marseille) (Minibacterium massiliensis), this protein is UPF0761 membrane protein mma_2179.